Consider the following 579-residue polypeptide: Glypican-2 (579 aa).

Residues 1 to 21 form the signal peptide; that stretch reads MSALRPLLLLLLHLCPGLGPG. Ser-55, Ser-92, and Ser-155 each carry an O-linked (Xyl...) (heparan sulfate) serine glycan. Disordered stretches follow at residues 347–382 and 483–552; these read GTPHPVQSRSRRAPAPREEASRSWRASAEEERPTTA and ALGQ…GRSR. A compositionally biased stretch (basic and acidic residues) spans 361–379; that stretch reads APREEASRSWRASAEEERP. Residues Ser-498 and Ser-500 are each glycosylated (O-linked (Xyl...) (heparan sulfate) serine). Over residues 517–527 the composition is skewed to pro residues; it reads VVPPARPPRPP. Ser-556 carries the GPI-anchor amidated serine lipid modification. Positions 557 to 579 are cleaved as a propeptide — removed in mature form; it reads SVGLHTPLVLLLLPSALTLLVLR.

This sequence belongs to the glypican family. As to quaternary structure, interacts (via heparan sulfate) with PTN; this interaction promotes neurite outgrowth through binding of PTN with chondroitin sulfate of proteoglycans, thereby releasing PTPRS of chondroitin sulfate proteoglycans (CSPGs) and leading to binding with heparan sulfate of GPC2. Interacts (heparan sulfate chain) with MDK; this interaction is inhibited by heparin followed by chondroitin sulfate E; this interaction induces GPC2 clustering through heparan sulfate chain; this interaction induces neuronal cell adhesion and neurite outgrowth.

The protein localises to the cell membrane. It is found in the secreted. The protein resides in the extracellular space. Cell surface proteoglycan that bears heparan sulfate. May fulfill a function related to the motile behaviors of developing neurons. This chain is Glypican-2 (Gpc2), found in Mus musculus (Mouse).